The primary structure comprises 886 residues: Probable mixed-linked glucan synthase 8 (886 aa).

Transmembrane regions (helical) follow at residues 87–107 (ILLH…VLFF) and 118–138 (GMFF…SWLL). Aspartate 213 is an active-site residue. Substrate-binding residues include aspartate 413 and aspartate 415. Aspartate 577 is a catalytic residue. 6 helical membrane passes run 659 to 679 (VFLL…IFYI), 683 to 703 (FPTY…IGMV), 723 to 743 (IIGA…KCFG), 775 to 795 (LLFP…AAIG), 812 to 832 (LGLV…LGIM), and 840 to 860 (YILF…DIAI).

The protein belongs to the glycosyltransferase 2 family. Plant cellulose synthase-like F subfamily.

The protein resides in the golgi apparatus membrane. Its function is as follows. May catalyze both beta-1,3 and beta-1,4 glycosidic linkage on beta-D-glucan. Essential for (1,3;1,4)-beta-D-glucans synthesis in grasses and cereals (Poaceae). The mixed-linked glucans (which are not present in walls of dicotyledons or most other monocotyledonous plants) are particularly important constituents of the walls of the starchy endosperm and aleurone cells of cereal grains such as oats, wheat, rice and barley. They can account for up to 70% by weight of the wall. This is Probable mixed-linked glucan synthase 8 (CSFL8) from Oryza sativa subsp. japonica (Rice).